Consider the following 399-residue polypeptide: Phosphoglycerate kinase (399 aa).

Substrate contacts are provided by residues 24 to 26 (DLN), Arg-41, 64 to 67 (HLGR), Arg-123, and Arg-160. Residues Lys-210, Gly-298, Glu-329, and 355-358 (GGDS) contribute to the ATP site.

Belongs to the phosphoglycerate kinase family. As to quaternary structure, monomer.

It is found in the cytoplasm. It catalyses the reaction (2R)-3-phosphoglycerate + ATP = (2R)-3-phospho-glyceroyl phosphate + ADP. It participates in carbohydrate degradation; glycolysis; pyruvate from D-glyceraldehyde 3-phosphate: step 2/5. The protein is Phosphoglycerate kinase of Salinispora arenicola (strain CNS-205).